The primary structure comprises 329 residues: IDS-like terpene synthase 1 (329 aa).

Positions 79 and 83 each coordinate Mg(2+).

Belongs to the FPP/GGPP synthase family. Mg(2+) is required as a cofactor.

The enzyme catalyses (2E)-geranyl diphosphate + H2O = linalool + diphosphate. It catalyses the reaction (2E,6E)-farnesyl diphosphate + H2O = (6E)-nerolidol + diphosphate. In terms of biological role, terpene synthase that shows monoterpene synthase activity and produces linalool, using geranyl diphosphate (GPP) as substrate. Also shows sesquiterpene synthase activity as it is able to convert farnesyl diphosphate (FPP) into (E)-nerolidol. The sequence is that of IDS-like terpene synthase 1 from Melampsora lini (Rust fungus).